The following is a 534-amino-acid chain: Cytokine-like nuclear factor N-PAC (534 aa).

Residues 8-66 (QGDLVWGKLGRYPPWPGKIVNPPKDLKKPRGKKCLFVKFFGTEDHAWIKVEQLKPYHAH) enclose the PWWP domain. Composition is skewed to basic and acidic residues over residues 93–122 (AKAK…QTGE) and 138–157 (RSRD…DKDS). The disordered stretch occupies residues 93 to 168 (AKAKEHAKEH…SPQPSSLKKL (76 aa)). Residues 144–156 (PRKRGRPPKDDKD) constitute a DNA-binding region (a.T hook). The interval 190-193 (DSWL) is interaction with histone H3. Residues 242-534 (GNIIPTDKKI…MSAVYRAYIH (293 aa)) form a dehydrogenase domain region. Residues 252-266 (GFLG…IVSN), Thr-343, and Lys-486 contribute to the NAD(+) site.

This sequence belongs to the HIBADH-related family. NP60 subfamily. In terms of assembly, homotetramere. Binds to mononucleosomes.

The protein localises to the nucleus. The protein resides in the chromosome. Cytokine-like nuclear factor with chromatin gene reader activity involved in chromatin modification and regulation of gene expression. Acts as a nucleosome-destabilizing factor that is recruited to genes during transcriptional activation. Recognizes and binds histone H3 without a preference for specific epigenetic markers and also binds DNA. Interacts with KDM1B and promotes its histone demethylase activity by facilitating the capture of H3 tails, they form a multifunctional enzyme complex that modifies transcribed chromatin and facilitates Pol II transcription through nucleosomes. The sequence is that of Cytokine-like nuclear factor N-PAC (glyr1) from Xenopus tropicalis (Western clawed frog).